We begin with the raw amino-acid sequence, 157 residues long: S-ribosylhomocysteine lyase (157 aa).

Fe cation contacts are provided by H54, H58, and C126.

This sequence belongs to the LuxS family. In terms of assembly, homodimer. Fe cation serves as cofactor.

It carries out the reaction S-(5-deoxy-D-ribos-5-yl)-L-homocysteine = (S)-4,5-dihydroxypentane-2,3-dione + L-homocysteine. Its function is as follows. Involved in the synthesis of autoinducer 2 (AI-2) which is secreted by bacteria and is used to communicate both the cell density and the metabolic potential of the environment. The regulation of gene expression in response to changes in cell density is called quorum sensing. Catalyzes the transformation of S-ribosylhomocysteine (RHC) to homocysteine (HC) and 4,5-dihydroxy-2,3-pentadione (DPD). The polypeptide is S-ribosylhomocysteine lyase (Bacillus licheniformis (strain ATCC 14580 / DSM 13 / JCM 2505 / CCUG 7422 / NBRC 12200 / NCIMB 9375 / NCTC 10341 / NRRL NRS-1264 / Gibson 46)).